Reading from the N-terminus, the 326-residue chain is MNIAVLPNSPDTAPQIADPLDHLADKLFHSMGSDGVYARTALYESIVERLAALITSHREAGTEALRFPPVMSRAQLEKSGYLKSFPNLLGCVCGLHGTEREINAAVSRFDAGGDWTTSLSPADLVLSPAACYPVYPIAASRGPLPKGGLRFDVAADCFRREPSKHLDRLQSFRMREYVCIGTPDDVSDFRERWMVRAQAIARDLGLTFRVDYASDPFFGRVGQMKAVSQKQQQLKFELLIPLRSEEQPTACMSFNYHREHFGTTWGIQDANGEPAHTGCVAFGMDRLAVAMFHTHGTDLSAWPAKVRDILGLQPHVAAGAHGEGWR.

Cysteine 131 contacts Zn(2+). ATP is bound by residues arginine 159, glutamate 161, and 168 to 169 (RL). Position 176 (glutamate 176) interacts with Zn(2+). Residue glutamate 176 participates in an L-alpha-amino acid binding. ATP is bound by residues lysine 235 and 250-253 (ACMS). Cysteine 279 contacts Zn(2+). Residue arginine 286 coordinates ATP.

Belongs to the class-II aminoacyl-tRNA synthetase family. Amino acid--[acyl-carrier-protein] ligase subfamily. In terms of assembly, homodimer. Zn(2+) is required as a cofactor.

It catalyses the reaction an L-alpha-amino acid + holo-[ACP] + ATP = an L-alpha-aminoacyl-[ACP] + AMP + diphosphate. Its function is as follows. Catalyzes the ATP-dependent activation of L-glycine and its transfer to the phosphopantetheine prosthetic group covalently attached to the vicinal carrier protein bsr0959 of yet unknown function. May participate in nonribosomal peptide synthesis or related processes. L-alanine is a poor substrate whereas L-serine or D-amino acids are not substrates for ATP-dependent activation. Does not display tRNA aminoacylation activity. In Bradyrhizobium diazoefficiens (strain JCM 10833 / BCRC 13528 / IAM 13628 / NBRC 14792 / USDA 110), this protein is Amino acid--[acyl-carrier-protein] ligase 1.